We begin with the raw amino-acid sequence, 128 residues long: Small ribosomal subunit protein bS6 (128 aa).

This sequence belongs to the bacterial ribosomal protein bS6 family.

Its function is as follows. Binds together with bS18 to 16S ribosomal RNA. This chain is Small ribosomal subunit protein bS6, found in Thermotoga sp. (strain RQ2).